Consider the following 143-residue polypeptide: Large ribosomal subunit protein bL28c (143 aa).

A chloroplast-targeting transit peptide spans 1-66 (MTTMATQGAW…SFPGIQPIVA (66 aa)).

This sequence belongs to the bacterial ribosomal protein bL28 family. As to quaternary structure, part of the 50S ribosomal subunit.

Its subcellular location is the plastid. It is found in the chloroplast. This is Large ribosomal subunit protein bL28c (RPL28) from Arabidopsis thaliana (Mouse-ear cress).